Here is a 398-residue protein sequence, read N- to C-terminus: Lymphocyte transmembrane adapter 1 (398 aa).

The Extracellular segment spans residues 1–37 (MDGVTPTLSTIRGRTLESSTLHVTPRSLDRNKDQITN). Residues 38–58 (IFSGFAGLLAILLVVAVFCIL) traverse the membrane as a helical; Signal-anchor for type III membrane protein segment. Residues 59–398 (WNWNKRKKRQ…GPGTQLLPDE (340 aa)) lie on the Cytoplasmic side of the membrane. A Phosphotyrosine modification is found at Y193. A disordered region spans residues 228–261 (TEERDEGCGDAGDCTSLYSPGAEDSDSLSNGEGS). Phosphotyrosine occurs at positions 268 and 294. The tract at residues 298–330 (PAADPSGSQQQAEKDVPSSNIGHVEDKTDDPGT) is disordered. The segment covering 303–318 (SGSQQQAEKDVPSSNI) has biased composition (polar residues). Over residues 320 to 329 (HVEDKTDDPG) the composition is skewed to basic and acidic residues. Residues Y345 and Y373 each carry the phosphotyrosine modification. The tract at residues 347–398 (DFQPFTQSEDSQMKHREEMSNEDSSDYENVLTAKLGGRDSEQGPGTQLLPDE) is disordered.

When phosphorylated, interacts with GRB2, PIK3R1 and GRAP2. In terms of processing, phosphorylated on tyrosines by Syk, Lck or ZAP70 upon TCR or BCR activation; which leads to the recruitment of GRB2, PIK3R1 and GRAP2. Expressed in spleen, thymus, and peripheral blood leukocytes. Expressed in several B-, T-, NK and monocyte cell lines.

Its subcellular location is the cell membrane. In terms of biological role, negatively regulates TCR (T-cell antigen receptor)-mediated signaling in T-cells and BCR (B-cell antigen receptor)-mediated signaling in B-cells. This is Lymphocyte transmembrane adapter 1 (LAX1) from Homo sapiens (Human).